Here is a 327-residue protein sequence, read N- to C-terminus: Ketol-acid reductoisomerase (NADP(+)) (327 aa).

One can recognise a KARI N-terminal Rossmann domain in the interval 2 to 182 (AKIYTDKDAS…GATRAGVIET (181 aa)). Residues 25–28 (YGIQ), arginine 48, serine 53, and 83–86 (DMEQ) each bind NADP(+). Residue histidine 108 is part of the active site. NADP(+) is bound at residue glycine 134. The region spanning 183–327 (TFAEETETDL…GAEMRKLLFG (145 aa)) is the KARI C-terminal knotted domain. The Mg(2+) site is built by aspartate 191, glutamate 195, glutamate 227, and glutamate 231. Position 252 (serine 252) interacts with substrate.

This sequence belongs to the ketol-acid reductoisomerase family. The cofactor is Mg(2+).

The catalysed reaction is (2R)-2,3-dihydroxy-3-methylbutanoate + NADP(+) = (2S)-2-acetolactate + NADPH + H(+). The enzyme catalyses (2R,3R)-2,3-dihydroxy-3-methylpentanoate + NADP(+) = (S)-2-ethyl-2-hydroxy-3-oxobutanoate + NADPH + H(+). It functions in the pathway amino-acid biosynthesis; L-isoleucine biosynthesis; L-isoleucine from 2-oxobutanoate: step 2/4. Its pathway is amino-acid biosynthesis; L-valine biosynthesis; L-valine from pyruvate: step 2/4. Functionally, involved in the biosynthesis of branched-chain amino acids (BCAA). Catalyzes an alkyl-migration followed by a ketol-acid reduction of (S)-2-acetolactate (S2AL) to yield (R)-2,3-dihydroxy-isovalerate. In the isomerase reaction, S2AL is rearranged via a Mg-dependent methyl migration to produce 3-hydroxy-3-methyl-2-ketobutyrate (HMKB). In the reductase reaction, this 2-ketoacid undergoes a metal-dependent reduction by NADPH to yield (R)-2,3-dihydroxy-isovalerate. This chain is Ketol-acid reductoisomerase (NADP(+)), found in Pyrobaculum neutrophilum (strain DSM 2338 / JCM 9278 / NBRC 100436 / V24Sta) (Thermoproteus neutrophilus).